The following is a 185-amino-acid chain: Calcium-binding protein K-like (185 aa).

2 EF-hand domains span residues 60–95 and 96–131; these read WDEA…MTRA and PTTD…VVVC. Ca(2+)-binding residues include Asp-73, Asp-75, Asn-77, Glu-84, Asp-109, Asp-111, Ser-113, Tyr-115, and Glu-120.

Belongs to the recoverin family.

This Dictyostelium discoideum (Social amoeba) protein is Calcium-binding protein K-like.